Reading from the N-terminus, the 1513-residue chain is Lid2 complex component lid2 (1513 aa).

One can recognise a JmjN domain in the interval 56–97 (GLSVQLNASNMTDPFKFLLDNWHTIFKNGAIKLLPPEGWQIP). The region spanning 121–212 (YEKNYDYFKK…YIKPFERDSS (92 aa)) is the ARID domain. The interval 211 to 253 (SSPSFKSKRSESSTRKIRNTRSSAQQESPIPETSAQSPVQTIQ) is disordered. Positions 230-253 (TRSSAQQESPIPETSAQSPVQTIQ) are enriched in polar residues. A PHD-type 1 zinc finger spans residues 268–318 (GEQCEYCGLDKNPETILLCDGCEAAYHTSCLDPPLTSIPKEDWYCDACKFN). A JmjC domain is found at 408-574 (KYSSEPWNLH…DGLLNSSISV (167 aa)). Ser722 is modified (phosphoserine). A disordered region spans residues 1063 to 1086 (LSLNDRPGPPMEPASRETSPDSEG). Basic and acidic residues predominate over residues 1076–1086 (ASRETSPDSEG). The PHD-type 2 zinc finger occupies 1093-1145 (KKGCIFCFCRLPESGVMIECEICHEWYHAKCLKMSKKKLRQDEKFTCPICDYR). An RING-type 1; degenerate zinc finger spans residues 1096 to 1143 (CIFCFCRLPESGVMIECEICHEWYHAKCLKMSKKKLRQDEKFTCPICD). Disordered regions lie at residues 1244 to 1268 (APNP…RQRQ) and 1280 to 1327 (ASAI…NNKN). Over residues 1257-1268 (TRKPRPTKRQRQ) the composition is skewed to basic residues. Positions 1301 to 1313 (VEAETKSKSEKSP) are enriched in basic and acidic residues. A compositionally biased stretch (polar residues) spans 1316 to 1326 (NGTNISDANNK). A PHD-type 3 zinc finger spans residues 1352-1403 (NSSCLCGEEFSPRDSFIDCTICERRFHYDCVGLNNEIADSVSKFTCPICMEQ). The RING-type 2; degenerate zinc finger occupies 1354-1401 (SCLCGEEFSPRDSFIDCTICERRFHYDCVGLNNEIADSVSKFTCPICM).

In terms of assembly, component of the Lid2 complex composed of ash2, jmj3, lid2, sdc1 and snt2.

The protein resides in the nucleus. The polypeptide is Lid2 complex component lid2 (lid2) (Schizosaccharomyces pombe (strain 972 / ATCC 24843) (Fission yeast)).